Reading from the N-terminus, the 807-residue chain is Dynein axonemal intermediate chain 4 (807 aa).

Polar residues-rich tracts occupy residues 1–11 (MHSSPTSTRKQ) and 22–31 (PRKSISFINP). Disordered regions lie at residues 1-44 (MHSS…AASN) and 300-320 (YSSK…DSES). Residues 32–43 (SKSSAGKGYAAS) show a composition bias toward low complexity. Residues 308 to 317 (AKDRDPKIQD) are compositionally biased toward basic and acidic residues. WD repeat units follow at residues 493-533 (QSSY…NIPV), 542-590 (KHLG…DCHD), 617-657 (SRQA…QYLE), 661-701 (GHKG…PFLS), 704-743 (PTTY…LDPL), and 749-788 (NPGI…TASD).

As to quaternary structure, part of the multisubunit axonemal dynein complex formed at least of two heavy chains and a number of intermediate and light chains. Associated with axonemal dynein subunits such as, DNAH2, DNAI3, and DYNLT1. Interacts with DYNLT1. In terms of tissue distribution, highly expressed in tissues containing motile cilia, including the trachea, lung, oviduct, and testis.

The protein resides in the cytoplasm. The protein localises to the cytoskeleton. It is found in the flagellum axoneme. It localises to the cilium axoneme. Its subcellular location is the dynein axonemal particle. Its function is as follows. Plays a critical role in the assembly of axonemal dynein complex, thereby playing a role in ciliary motility. This is Dynein axonemal intermediate chain 4 (Dnai4) from Mus musculus (Mouse).